The chain runs to 302 residues: 4-diphosphocytidyl-2-C-methyl-D-erythritol kinase (302 aa).

Lysine 13 is a catalytic residue. 101-111 (PVASGIGGGSS) is an ATP binding site. The active site involves aspartate 143.

It belongs to the GHMP kinase family. IspE subfamily.

The catalysed reaction is 4-CDP-2-C-methyl-D-erythritol + ATP = 4-CDP-2-C-methyl-D-erythritol 2-phosphate + ADP + H(+). It functions in the pathway isoprenoid biosynthesis; isopentenyl diphosphate biosynthesis via DXP pathway; isopentenyl diphosphate from 1-deoxy-D-xylulose 5-phosphate: step 3/6. Functionally, catalyzes the phosphorylation of the position 2 hydroxy group of 4-diphosphocytidyl-2C-methyl-D-erythritol. The chain is 4-diphosphocytidyl-2-C-methyl-D-erythritol kinase from Granulibacter bethesdensis (strain ATCC BAA-1260 / CGDNIH1).